A 735-amino-acid polypeptide reads, in one-letter code: Ion-translocating oxidoreductase complex subunit C (735 aa).

2 consecutive 4Fe-4S ferredoxin-type domains span residues 368-397 (MGAP…QQLY) and 407-436 (KATA…VQYF). C377, C380, C383, C387, C416, C419, C422, and C426 together coordinate [4Fe-4S] cluster. The segment at 534–711 (QARAKQAAHP…EPVEPADPRK (178 aa)) is disordered.

It belongs to the 4Fe4S bacterial-type ferredoxin family. RnfC subfamily. The complex is composed of six subunits: RsxA, RsxB, RsxC, RsxD, RsxE and RsxG. [4Fe-4S] cluster is required as a cofactor.

Its subcellular location is the cell inner membrane. In terms of biological role, part of a membrane-bound complex that couples electron transfer with translocation of ions across the membrane. Required to maintain the reduced state of SoxR. The sequence is that of Ion-translocating oxidoreductase complex subunit C from Salmonella paratyphi A (strain ATCC 9150 / SARB42).